A 465-amino-acid polypeptide reads, in one-letter code: Ribulose bisphosphate carboxylase large chain (465 aa).

K4 is subject to N6,N6,N6-trimethyllysine. Residues N113 and T163 each contribute to the substrate site. K165 acts as the Proton acceptor in catalysis. K167 contacts substrate. Mg(2+)-binding residues include K191, D193, and E194. Residue K191 is modified to N6-carboxylysine. The active-site Proton acceptor is H284. R285, H317, and S369 together coordinate substrate.

It belongs to the RuBisCO large chain family. Type I subfamily. Heterohexadecamer of 8 large chains and 8 small chains; disulfide-linked. The disulfide link is formed within the large subunit homodimers. Requires Mg(2+) as cofactor. Post-translationally, the disulfide bond which can form in the large chain dimeric partners within the hexadecamer appears to be associated with oxidative stress and protein turnover.

It is found in the plastid. The protein localises to the chloroplast. It carries out the reaction 2 (2R)-3-phosphoglycerate + 2 H(+) = D-ribulose 1,5-bisphosphate + CO2 + H2O. It catalyses the reaction D-ribulose 1,5-bisphosphate + O2 = 2-phosphoglycolate + (2R)-3-phosphoglycerate + 2 H(+). Its function is as follows. RuBisCO catalyzes two reactions: the carboxylation of D-ribulose 1,5-bisphosphate, the primary event in carbon dioxide fixation, as well as the oxidative fragmentation of the pentose substrate in the photorespiration process. Both reactions occur simultaneously and in competition at the same active site. In Ilex crenata (Japanese holly), this protein is Ribulose bisphosphate carboxylase large chain.